The primary structure comprises 145 residues: Peptide methionine sulfoxide reductase MsrB (145 aa).

Residues 4–127 (SDELKQRIGD…NSAALKFIPY (124 aa)) enclose the MsrB domain. Cysteine 116 functions as the Nucleophile in the catalytic mechanism.

The protein belongs to the MsrB Met sulfoxide reductase family.

It catalyses the reaction L-methionyl-[protein] + [thioredoxin]-disulfide + H2O = L-methionyl-(R)-S-oxide-[protein] + [thioredoxin]-dithiol. This Streptococcus pyogenes serotype M18 (strain MGAS8232) protein is Peptide methionine sulfoxide reductase MsrB.